The primary structure comprises 251 residues: MPKRDLPWRSMPGTSKTSRNANYSPRARIGPRVDKASEWVHRPMYRKPRIYRTLRTADVPRGCEGPCKVQSYEQRHDISHVGKVMCISDVTRGNGITHRVGKRFCVKSVYILGKIWMDENIKLQNHTNSVMFWLVRDRRPYGTPMDFGHVFNMFDNEPSTATVKNDLRDRYQVLHKFYGKVTGGQYASNEQAIVKRFWKVNNHVVYNHQEAGKYENHTENALLLYMACTHASNPVYATLKIRIYFYDSLMN.

The tract at residues 1–27 (MPKRDLPWRSMPGTSKTSRNANYSPRA) is disordered. The Bipartite nuclear localization signal signature appears at 3 to 20 (KRDLPWRSMPGTSKTSRN). Positions 12–23 (PGTSKTSRNANY) are enriched in polar residues. A Nuclear localization signal motif is present at residues 35–49 (KASEWVHRPMYRKPR). A zinc finger lies at 63 to 80 (CEGPCKVQSYEQRHDISH). Residues 96-117 (ITHRVGKRFCVKSVYILGKIWM) carry the Nuclear export signal motif. Residues 195 to 242 (KRFWKVNNHVVYNHQEAGKYENHTENALLLYMACTHASNPVYATLKIR) carry the Bipartite nuclear localization signal motif.

The protein belongs to the geminiviridae capsid protein family. Homomultimer. Binds to single-stranded and double-stranded viral DNA. Interacts (via nuclear localization signals) with host importin alpha-1a.

The protein resides in the virion. It is found in the host nucleus. Its function is as follows. Encapsidates the viral DNA into characteristic twinned ('geminate') particles. Binds the genomic viral ssDNA and shuttles it into and out of the cell nucleus. The CP of bipartite geminiviruses is not required for cell-to-cell or systemic movement. The protein is Capsid protein of Abutilon (Upland cotton).